Consider the following 866-residue polypeptide: MTTMIGQTRQAGSSSYEQAWQAEQAPCPGMEPDTLTVGVVVVTRNPTFFQTGLSVLNDIRDYVFNRVHIQSELPLKLSELASDPLYSEAREKAIHFLKNQSKALNIQVIQCASLAEATGKIIYTHALEQQPEFQMGMLFYDQTSLGNVDDSIEKIDRDLDAFYSAMQRGGIPAFYTTFSTVTFIRDVRSSFRYLPQQYREIVRSEDPAIFQTELLCLWMDFFEMNYTNRRVKPIGALALHNTLAEQLIQFFERTAASRWLVSYYTGSIISNLIGYLDRHAEAHGALVLRGPNEHAIACGAMANWQLYRMPFLGVVTSGMMDEFKGTLINLKETAAQGIIVAAENRNNQWYSFQGTQTPTEDMRDVLAAKRIPYVYIDDVDGIADGLAEVFRLYHQAQGPVVILATQNVLESTLSLEPVPGDLPPVSGLPAYDCPPISDSFEQAMALINEGPEKLVWQLGPVSDDEYALVHEIADAAGLALVDSLAHPGSAPKYYQGKRNPHYLGTLAIYGYSPRVYNFLHTNDKLNPMSDQSVFMIKSRVAQITTPFSDGRLERKVHLVQLTHDERHLSPYADLKLHMDCLTFLRAVKANLHVDAALREKRKALIAAYLDSPSDVVSQLPSLPMSANYFFCQLNRVIENLIKTENFDFTGVYDVGRCGISAVRNVAKTRRGFSGWYGRALMGDALLATSYLAHTSPTHVVAFIGDGAKGIVPDILPAFIDNILTHPQLLNKSITIFYFCNGGLSVINTYQERILFNRTSRQMRLVNVDQPAFEQTVDDFHIQGKTLTHFDEDTIRHALMTPKRLNLFSVVLGHNNEGDGISLATAKGWQRDPSDREALQERKDWAARQPESTSTSFDQGQNKEAIS.

A disordered region spans residues 826–866 (KGWQRDPSDREALQERKDWAARQPESTSTSFDQGQNKEAIS). Residues 828 to 845 (WQRDPSDREALQERKDWA) show a composition bias toward basic and acidic residues. The span at 849–866 (PESTSTSFDQGQNKEAIS) shows a compositional bias: polar residues.

This sequence belongs to the TPP enzyme family. Requires thiamine diphosphate as cofactor.

It catalyses the reaction (2E)-octenal + pyruvate + H(+) = (S)-3-acetyloctanal + CO2. Its pathway is antibiotic biosynthesis; prodigiosin biosynthesis. Involved in the biosynthesis of 2-methyl-3-n-amyl-pyrrole (MAP), one of the terminal products involved in the biosynthesis of the red antibiotic prodigiosin (Pig). Catalyzes the decarboxylation of pyruvate, followed by the modification of the resulting two-carbon fragment acetaldehyde at the C3 position of the 2-octenal (1,2-addition of acetaldehyde) giving 3-acetyloctanal. The chain is Thiamine diphosphate dependent-3-acetyloctanal synthase PigD from Serratia sp. (strain ATCC 39006) (Prodigiosinella confusarubida).